The following is a 325-amino-acid chain: Mediator of RNA polymerase II transcription subunit 30 (325 aa).

3 stretches are compositionally biased toward low complexity: residues 1 to 11 (MWKYGQNQGNQ), 109 to 122 (PPQQAMQQQMMGPQ), and 132 to 154 (GPQQQQQLQQQQQQSNLQQQQQQ). Disordered regions lie at residues 1 to 26 (MWKYGQNQGNQGPAGGGGGAPNMMPM) and 109 to 176 (PPQQ…LAIS). The segment covering 158–169 (GSGGAPGAGGVG) has biased composition (gly residues).

This sequence belongs to the Mediator complex subunit 30 family. Component of the Mediator complex.

The protein localises to the nucleus. Its function is as follows. Component of the Mediator complex, a coactivator involved in the regulated transcription of nearly all RNA polymerase II-dependent genes. Mediator functions as a bridge to convey information from gene-specific regulatory proteins to the basal RNA polymerase II transcription machinery. Mediator is recruited to promoters by direct interactions with regulatory proteins and serves as a scaffold for the assembly of a functional preinitiation complex with RNA polymerase II and the general transcription factors. In Drosophila pseudoobscura pseudoobscura (Fruit fly), this protein is Mediator of RNA polymerase II transcription subunit 30 (MED30).